Consider the following 1742-residue polypeptide: Meiosis regulator and mRNA stability factor 1 (1742 aa).

S65 carries the post-translational modification Phosphoserine. The 138-residue stretch at 351–488 folds into the NYN domain; that stretch reads IGVFWDIENC…ALLHHANELI (138 aa). Disordered regions lie at residues 620 to 642 and 655 to 721; these read PSSAKAAPGKGSQANSGSATRNA and SKTG…KEKE. A compositionally biased stretch (polar residues) spans 631-642; sequence SQANSGSATRNA. Low complexity predominate over residues 673–689; that stretch reads APPHRSSSAAAPAPKAP. Y696 bears the Phosphotyrosine mark. S757 bears the Phosphoserine mark. Residues 788–867 enclose the RRM domain; it reads VDVQISNLDY…KKILVSLATG (80 aa). HTH OST-type domains lie at 872-946 and 1000-1077; these read SLSL…SPLG and SLKT…HNKP. Phosphoserine occurs at positions 1089 and 1091. HTH OST-type domains are found at residues 1097–1171, 1173–1247, 1257–1332, 1333–1408, 1409–1484, and 1486–1560; these read QLIQ…LTHR, QVKR…CIPR, RTKQ…TEVE, RFKA…INRK, SLRA…CVKL, and SLYL…LKND. S1571 bears the Phosphoserine mark. A disordered region spans residues 1678–1729; sequence IRNENLPPDPSSPGVSAAVPAPPSPSSETPESLLSKDPTESPAKKQPKNRVK. Residues 1703 to 1712 are compositionally biased toward low complexity; sequence SSETPESLLS.

In terms of assembly, interacts with LIMK2.

It localises to the peroxisome. Its function is as follows. Essential regulator of oogenesis required for female meiotic progression to repress transposable elements and preventing their mobilization, which is essential for the germline integrity. Probably acts via some RNA metabolic process, equivalent to the piRNA system in males, which mediates the repression of transposable elements during meiosis by forming complexes composed of RNAs and governs the methylation and subsequent repression of transposons. Also required to protect from DNA double-strand breaks. This Bos taurus (Bovine) protein is Meiosis regulator and mRNA stability factor 1.